The primary structure comprises 400 residues: Homoserine O-acetyltransferase (400 aa).

One can recognise an AB hydrolase-1 domain in the interval 64 to 374 (NAILVCHALT…DKGHDAFLLD (311 aa)). S169 serves as the catalytic Nucleophile. Residue R239 participates in substrate binding. Catalysis depends on residues D335 and H368. D369 contacts substrate.

Belongs to the AB hydrolase superfamily. MetX family. Homodimer.

It localises to the cytoplasm. The catalysed reaction is L-homoserine + acetyl-CoA = O-acetyl-L-homoserine + CoA. It participates in amino-acid biosynthesis; L-methionine biosynthesis via de novo pathway; O-acetyl-L-homoserine from L-homoserine: step 1/1. Functionally, transfers an acetyl group from acetyl-CoA to L-homoserine, forming acetyl-L-homoserine. This chain is Homoserine O-acetyltransferase, found in Rhodopseudomonas palustris (strain ATCC BAA-98 / CGA009).